A 223-amino-acid polypeptide reads, in one-letter code: Voltage-dependent calcium channel gamma-1 subunit (223 aa).

Over 1-10 (MSQTKTLKVR) the chain is Cytoplasmic. The helical transmembrane segment at 11–29 (VALLCILVGIVLALVAVVT) threads the bilayer. Over 30–109 (DHWAVLSPHV…TQKEYSISAA (80 aa)) the chain is Extracellular. Residues Asn-43 and Asn-80 are each glycosylated (N-linked (GlcNAc...) asparagine). Residues Cys-57 and Cys-81 are joined by a disulfide bond. The chain crosses the membrane as a helical span at residues 110 to 130 (AIAIFSLGFIIVGTLCALLSF). Residues 131 to 135 (RKKRD) are Cytoplasmic-facing. The chain crosses the membrane as a helical span at residues 136-156 (YLLRPASMFYIFAGLCLSVSA). The Extracellular portion of the chain corresponds to 157 to 180 (EVMRQSVQRMVDSEHTAWIAHSLA). Residues 181–205 (WSFICACVAAALLLVGGLALLLLAL) form a helical membrane-spanning segment. At 206–223 (PRMPRDPWESCMDAEPEH) the chain is on the cytoplasmic side.

It belongs to the PMP-22/EMP/MP20 family. CACNG subfamily. Component of a calcium channel complex consisting of a pore-forming alpha subunit (CACNA1S) and the ancillary subunits CACNB1 or CACNB2, CACNG1 and CACNA2D1. The channel complex contains alpha, beta, gamma and delta subunits in a 1:1:1:1 ratio, i.e. it contains either CACNB1 or CACNB2. Post-translationally, N-glycosylated.

The protein resides in the cell membrane. It localises to the sarcolemma. Regulatory subunit of the voltage-gated calcium channel that gives rise to L-type calcium currents in skeletal muscle. Regulates channel inactivation kinetics. This is Voltage-dependent calcium channel gamma-1 subunit (CACNG1) from Bos taurus (Bovine).